The chain runs to 370 residues: Endopolygalacturonase A (370 aa).

Positions 1–19 are cleaved as a signal peptide; the sequence is MPSAKPLFCLATLAGAALA. Positions 20–32 are excised as a propeptide; the sequence is APAPSRATDFNKR. An intrachain disulfide couples cysteine 35 to cysteine 50. PbH1 repeat units lie at residues 162–192, 193–214, 215–235, 244–265, 273–295, and 307–352; these read SDNLVIEDVTIDNSDGDSEGGHNTDGFDISE, STYITITGATVKNQGDCVAINS, GENIYFSGGTCSGGHGLSIGS, VKNVTFIDSTVSDSENGVRIKT, VEDITYSNIQLSGISDYGIVIEQ, and SNGV…DITG. Cysteine 209 and cysteine 225 form a disulfide bridge. Histidine 229 is a catalytic residue. An N-linked (GlcNAc...) asparagine glycan is attached at asparagine 246. 2 disulfides stabilise this stretch: cysteine 335–cysteine 340 and cysteine 359–cysteine 368.

Belongs to the glycosyl hydrolase 28 family.

It is found in the secreted. The catalysed reaction is (1,4-alpha-D-galacturonosyl)n+m + H2O = (1,4-alpha-D-galacturonosyl)n + (1,4-alpha-D-galacturonosyl)m.. Involved in maceration and soft-rotting of plant tissue. Hydrolyzes the 1,4-alpha glycosidic bonds of de-esterified pectate in the smooth region of the plant cell wall. The sequence is that of Endopolygalacturonase A (pgaA) from Aspergillus awamori (Black koji mold).